Here is a 461-residue protein sequence, read N- to C-terminus: Cysteine--tRNA ligase (461 aa).

Cysteine 28 is a binding site for Zn(2+). Residues 30–40 (ITVYDLCHIGH) carry the 'HIGH' region motif. Zn(2+) contacts are provided by cysteine 209, histidine 234, and glutamate 238. The 'KMSKS' region signature appears at 266–270 (KMSKS). Position 269 (lysine 269) interacts with ATP.

It belongs to the class-I aminoacyl-tRNA synthetase family. As to quaternary structure, monomer. The cofactor is Zn(2+).

The protein localises to the cytoplasm. The catalysed reaction is tRNA(Cys) + L-cysteine + ATP = L-cysteinyl-tRNA(Cys) + AMP + diphosphate. In Shigella boydii serotype 18 (strain CDC 3083-94 / BS512), this protein is Cysteine--tRNA ligase.